We begin with the raw amino-acid sequence, 319 residues long: ATP-dependent 6-phosphofructokinase (319 aa).

ATP is bound at residue Gly11. 21-25 (RAVVR) serves as a coordination point for ADP. ATP-binding positions include 72–73 (RC) and 102–105 (GDGS). Asp103 is a binding site for Mg(2+). Substrate is bound at residue 125–127 (TID). The active-site Proton acceptor is the Asp127. Arg154 serves as a coordination point for ADP. Residues Arg162 and 169–171 (MGR) contribute to the substrate site. Residues 185–187 (GAE), Arg211, and 213–215 (KKH) contribute to the ADP site. Substrate is bound by residues Glu222, Arg243, and 249–252 (HIQR).

It belongs to the phosphofructokinase type A (PFKA) family. ATP-dependent PFK group I subfamily. Prokaryotic clade 'B1' sub-subfamily. Homotetramer. Requires Mg(2+) as cofactor.

It is found in the cytoplasm. The catalysed reaction is beta-D-fructose 6-phosphate + ATP = beta-D-fructose 1,6-bisphosphate + ADP + H(+). Its pathway is carbohydrate degradation; glycolysis; D-glyceraldehyde 3-phosphate and glycerone phosphate from D-glucose: step 3/4. Allosterically activated by ADP and other diphosphonucleosides, and allosterically inhibited by phosphoenolpyruvate. Catalyzes the phosphorylation of D-fructose 6-phosphate to fructose 1,6-bisphosphate by ATP, the first committing step of glycolysis. This is ATP-dependent 6-phosphofructokinase from Bacillus velezensis (strain DSM 23117 / BGSC 10A6 / LMG 26770 / FZB42) (Bacillus amyloliquefaciens subsp. plantarum).